The following is a 259-amino-acid chain: Imidazole glycerol phosphate synthase subunit HisF (259 aa).

Catalysis depends on residues D11 and D130.

The protein belongs to the HisA/HisF family. In terms of assembly, heterodimer of HisH and HisF.

It localises to the cytoplasm. It catalyses the reaction 5-[(5-phospho-1-deoxy-D-ribulos-1-ylimino)methylamino]-1-(5-phospho-beta-D-ribosyl)imidazole-4-carboxamide + L-glutamine = D-erythro-1-(imidazol-4-yl)glycerol 3-phosphate + 5-amino-1-(5-phospho-beta-D-ribosyl)imidazole-4-carboxamide + L-glutamate + H(+). It participates in amino-acid biosynthesis; L-histidine biosynthesis; L-histidine from 5-phospho-alpha-D-ribose 1-diphosphate: step 5/9. IGPS catalyzes the conversion of PRFAR and glutamine to IGP, AICAR and glutamate. The HisF subunit catalyzes the cyclization activity that produces IGP and AICAR from PRFAR using the ammonia provided by the HisH subunit. In Oleidesulfovibrio alaskensis (strain ATCC BAA-1058 / DSM 17464 / G20) (Desulfovibrio alaskensis), this protein is Imidazole glycerol phosphate synthase subunit HisF.